Consider the following 645-residue polypeptide: MSDKSDLKAELERKKQRLAQIREEKKRKEEERKKKEADMQQKKEPVQDDSDLDRKRRETEALLQSIGISPEPPLVQPLHFLTWDTCYFHYLVPTPMSPSSKSVSTPSEAGSQDSGDLGPLTRTLQWDTDPSVLQLQSDSELGRRLHKLGVSKVTQVDFLPREVVSYSKETQTPLATHQSEEDEEDEEMVESKVGQDSELENQDKKQEVKEAPPRELTEEEKQQILHSEEFLIFFDRTIRVIERALAEDSDIFFDYSGRELEEKDGDVQAGANLSFNRQFYDEHWSKHRVVTCMDWSLQYPELMVASYNNNEDAPHEPDGVALVWNMKFKKTTPEYVFHCQSSVMSVCFARFHPNLVVGGTYSGQIVLWDNRSHRRTPVQRTPLSAAAHTHPVYCVNVVGTQNAHNLITVSTDGKMCSWSLDMLSTPQESMELVYNKSKPVAVTGMAFPTGDVNNFVVGSEEGTVYTACRHGSKAGIGEVFEGHQGPVTGINCHMAVGPIDFSHLFVTSSFDWTVKLWTTKHNKPLYSFEDNADYVYDVMWSPVHPALFACVDGMGRLDLWNLNNDTEVPTASVAIEGASALNRVRWAQAGKEVAVGDSEGRIWVYDVGELAVPHNDEWTRFARTLVEIRANRADSEEEGTVELSA.

Composition is skewed to basic and acidic residues over residues 1 to 13 (MSDK…ELER) and 20 to 58 (QIRE…KRRE). Disordered regions lie at residues 1-58 (MSDK…KRRE) and 96-125 (MSPS…RTLQ). An N-acetylserine modification is found at S2. The interval 2-123 (SDKSDLKAEL…SGDLGPLTRT (122 aa)) is interaction with DCTN1. S50 and S100 each carry phosphoserine. The segment covering 96–107 (MSPSSKSVSTPS) has biased composition (low complexity). T105 is modified (phosphothreonine). S107, S111, and S114 each carry phosphoserine. The tract at residues 147–163 (KLGVSKVTQVDFLPREV) is interaction with DYNLT1. The disordered stretch occupies residues 169–221 (ETQTPLATHQSEEDEEDEEMVESKVGQDSELENQDKKQEVKEAPPRELTEEEK). The residue at position 176 (T176) is a Phosphothreonine. Phosphoserine is present on residues S179 and S197. Basic and acidic residues predominate over residues 189–221 (VESKVGQDSELENQDKKQEVKEAPPRELTEEEK). WD repeat units follow at residues 285–334 (SKHR…TTPE), 338–378 (HCQS…RTPV), 387–428 (AHTH…TPQE), 437–477 (SKPV…AGIG), 482–527 (GHQG…PLYS), 530–570 (DNAD…EVPT), and 576–615 (EGAS…VPHN). S635 is subject to Phosphoserine.

The protein belongs to the dynein intermediate chain family. In terms of assembly, homodimer. The cytoplasmic dynein 1 complex consists of two catalytic heavy chains (HCs) and a number of non-catalytic subunits presented by intermediate chains (ICs), light intermediate chains (LICs) and light chains (LCs); the composition seems to vary in respect to the IC, LIC and LC composition. The heavy chain homodimer serves as a scaffold for the probable homodimeric assembly of the respective non-catalytic subunits. The ICs and LICs bind directly to the HC dimer and the LCs assemble on the IC dimer. Interacts with DYNC1H1. Interacts with DYNLT1 and DYNLT3. Interacts with DCTN1. Interacts with MCRS1; the interaction is required for the proper distribution of centriolar satellites.

The protein resides in the cytoplasm. The protein localises to the chromosome. It is found in the centromere. It localises to the kinetochore. Its subcellular location is the cytoskeleton. The protein resides in the spindle pole. In terms of biological role, acts as one of several non-catalytic accessory components of the cytoplasmic dynein 1 complex that are thought to be involved in linking dynein to cargos and to adapter proteins that regulate dynein function. Cytoplasmic dynein 1 acts as a motor for the intracellular retrograde motility of vesicles and organelles along microtubules. The intermediate chains mediate the binding of dynein to dynactin via its 150 kDa component (p150-glued) DCTN1. May play a role in mediating the interaction of cytoplasmic dynein with membranous organelles and kinetochores. The polypeptide is Cytoplasmic dynein 1 intermediate chain 1 (DYNC1I1) (Homo sapiens (Human)).